A 282-amino-acid polypeptide reads, in one-letter code: MTKILYGNEVALKIKEDLNLRIDKLKEKNIIPKLAILRMGNKPDDIAYERSIIKSCEKLNIETKVEELNEDILEEDFLKLMESLNNEKEIHGILVFRPYPKHLNENTINSSIALNKDVDCMHPLNLERIFEGDLNQFVPCTPEAVIEILKYYDIDLKGKNIVIINRSMVVGKPLSMMVLSNNATVTICHSKTIDLPSITKKADIVVTAIGKAKLIKEEYFNEDSIVMDVSINVDENGKLCGDVDFENVKEKVGAITPVPKGVGSVTTTLLLKHIVDAAERNS.

NADP(+)-binding positions include 165 to 167 (NRS), Ser-190, and Ile-231.

Belongs to the tetrahydrofolate dehydrogenase/cyclohydrolase family. In terms of assembly, homodimer.

The enzyme catalyses (6R)-5,10-methylene-5,6,7,8-tetrahydrofolate + NADP(+) = (6R)-5,10-methenyltetrahydrofolate + NADPH. It carries out the reaction (6R)-5,10-methenyltetrahydrofolate + H2O = (6R)-10-formyltetrahydrofolate + H(+). Its pathway is one-carbon metabolism; tetrahydrofolate interconversion. Functionally, catalyzes the oxidation of 5,10-methylenetetrahydrofolate to 5,10-methenyltetrahydrofolate and then the hydrolysis of 5,10-methenyltetrahydrofolate to 10-formyltetrahydrofolate. This Clostridium botulinum (strain Kyoto / Type A2) protein is Bifunctional protein FolD.